The following is a 230-amino-acid chain: N-(5'-phosphoribosyl)anthranilate isomerase (230 aa).

The protein belongs to the TrpF family.

The catalysed reaction is N-(5-phospho-beta-D-ribosyl)anthranilate = 1-(2-carboxyphenylamino)-1-deoxy-D-ribulose 5-phosphate. It participates in amino-acid biosynthesis; L-tryptophan biosynthesis; L-tryptophan from chorismate: step 3/5. This chain is N-(5'-phosphoribosyl)anthranilate isomerase, found in Ralstonia nicotianae (strain ATCC BAA-1114 / GMI1000) (Ralstonia solanacearum).